The sequence spans 82 residues: Small ribosomal subunit protein bS16 (82 aa).

Belongs to the bacterial ribosomal protein bS16 family.

In Deinococcus deserti (strain DSM 17065 / CIP 109153 / LMG 22923 / VCD115), this protein is Small ribosomal subunit protein bS16.